Reading from the N-terminus, the 354-residue chain is 3-isopropylmalate dehydrogenase (354 aa).

Position 73–86 (73–86) interacts with NAD(+); the sequence is GPAYDKLDRPLRPE. Residues arginine 93, arginine 103, arginine 131, and aspartate 221 each coordinate substrate. Mg(2+) is bound by residues aspartate 221, aspartate 245, and aspartate 249. 279–291 contributes to the NAD(+) binding site; the sequence is GSAPDIAGQNLAN.

The protein belongs to the isocitrate and isopropylmalate dehydrogenases family. LeuB type 1 subfamily. As to quaternary structure, homodimer. It depends on Mg(2+) as a cofactor. Mn(2+) is required as a cofactor.

It is found in the cytoplasm. It catalyses the reaction (2R,3S)-3-isopropylmalate + NAD(+) = 4-methyl-2-oxopentanoate + CO2 + NADH. It participates in amino-acid biosynthesis; L-leucine biosynthesis; L-leucine from 3-methyl-2-oxobutanoate: step 3/4. Catalyzes the oxidation of 3-carboxy-2-hydroxy-4-methylpentanoate (3-isopropylmalate) to 3-carboxy-4-methyl-2-oxopentanoate. The product decarboxylates to 4-methyl-2 oxopentanoate. The polypeptide is 3-isopropylmalate dehydrogenase (Chromobacterium violaceum (strain ATCC 12472 / DSM 30191 / JCM 1249 / CCUG 213 / NBRC 12614 / NCIMB 9131 / NCTC 9757 / MK)).